The chain runs to 117 residues: Small nuclear ribonucleoprotein Sm D1 (117 aa).

The region spanning 2-74 is the Sm domain; the sequence is KLVRFLMKLT…IRYYILPDSL (73 aa). Residues 81-117 are disordered; it reads IDDSTKPKQKKKEVVRGRGRGRGRGTRGRGRGASRGF. Residues 87 to 117 are compositionally biased toward basic residues; that stretch reads PKQKKKEVVRGRGRGRGRGTRGRGRGASRGF.

Belongs to the snRNP core protein family. In terms of assembly, belongs to the 40S cdc5-associated complex (or cwf complex), a spliceosome sub-complex reminiscent of a late-stage spliceosome composed of the U2, U5 and U6 snRNAs and at least brr2, cdc5, cwf2/prp3, cwf3/syf1, cwf4/syf3, cwf5/ecm2, spp42/cwf6, cwf7/spf27, cwf8, cwf9, cwf10, cwf11, cwf12, prp45/cwf13, cwf14, cwf15, cwf16, cwf17, cwf18, cwf19, cwf20, cwf21, cwf22, cwf23, cwf24, cwf25, cwf26, cyp7/cwf27, cwf28, cwf29/ist3, lea1, msl1, prp5/cwf1, prp10, prp12/sap130, prp17, prp22, sap61, sap62, sap114, sap145, slu7, smb1, smd1, smd3, smf1, smg1 and syf2. Interacts with saf5; the interaction is direct.

The protein localises to the nucleus. The protein resides in the cytoplasm. Plays a role in pre-mRNA splicing as a core component of the spliceosomal U1, U2, U4 and U5 small nuclear ribonucleoproteins (snRNPs), the building blocks of the spliceosome. This is Small nuclear ribonucleoprotein Sm D1 (smd1) from Schizosaccharomyces pombe (strain 972 / ATCC 24843) (Fission yeast).